We begin with the raw amino-acid sequence, 216 residues long: Small ribosomal subunit protein uS2 (216 aa).

Belongs to the universal ribosomal protein uS2 family.

The sequence is that of Small ribosomal subunit protein uS2 from Carsonella ruddii (strain PV).